The chain runs to 228 residues: MYLLIPAAGMGKRMGSNRNKLLLTLLGKPLLSWTLLAAEASQKIEWVGIIGQPYDFPEFKTILTTISFTKPVELIQGGETRQASVYNGLQALPKAADNVLIHDGARCLVTPDLFDRCAEELLTCQGLIAAISVKDTIKIVDSNQFIKDTPNRSNLWAAQTPQGFKVSLLKQCHEKGYQLGWQVTDDAALFEKCQLPVKIVEGEETNLKVTTPVDLAIAEFILKQRFTH.

It belongs to the IspD/TarI cytidylyltransferase family. IspD subfamily.

The enzyme catalyses 2-C-methyl-D-erythritol 4-phosphate + CTP + H(+) = 4-CDP-2-C-methyl-D-erythritol + diphosphate. Its pathway is isoprenoid biosynthesis; isopentenyl diphosphate biosynthesis via DXP pathway; isopentenyl diphosphate from 1-deoxy-D-xylulose 5-phosphate: step 2/6. Functionally, catalyzes the formation of 4-diphosphocytidyl-2-C-methyl-D-erythritol from CTP and 2-C-methyl-D-erythritol 4-phosphate (MEP). The protein is 2-C-methyl-D-erythritol 4-phosphate cytidylyltransferase of Crocosphaera subtropica (strain ATCC 51142 / BH68) (Cyanothece sp. (strain ATCC 51142)).